Consider the following 240-residue polypeptide: Ribonuclease PH (240 aa).

Residues R87 and 125-127 (GTR) contribute to the phosphate site.

This sequence belongs to the RNase PH family. As to quaternary structure, homohexameric ring arranged as a trimer of dimers.

The enzyme catalyses tRNA(n+1) + phosphate = tRNA(n) + a ribonucleoside 5'-diphosphate. Its function is as follows. Phosphorolytic 3'-5' exoribonuclease that plays an important role in tRNA 3'-end maturation. Removes nucleotide residues following the 3'-CCA terminus of tRNAs; can also add nucleotides to the ends of RNA molecules by using nucleoside diphosphates as substrates, but this may not be physiologically important. Probably plays a role in initiation of 16S rRNA degradation (leading to ribosome degradation) during starvation. In Pseudomonas fluorescens (strain Pf0-1), this protein is Ribonuclease PH.